The chain runs to 301 residues: NDP-polyphosphate phosphotransferase 3 (301 aa).

The span at 1 to 12 (MNRNGSTKDPRR) shows a compositional bias: basic and acidic residues. A disordered region spans residues 1–21 (MNRNGSTKDPRRMTGAATGEI).

The protein belongs to the polyphosphate kinase 2 (PPK2) family. Class I subfamily. Mg(2+) is required as a cofactor.

The enzyme catalyses [phosphate](n) + ATP = [phosphate](n+1) + ADP. The catalysed reaction is [phosphate](n) + CTP = [phosphate](n+1) + CDP. It catalyses the reaction [phosphate](n) + GTP = [phosphate](n+1) + GDP. It carries out the reaction [phosphate](n) + UTP = [phosphate](n+1) + UDP. In terms of biological role, uses inorganic polyphosphate (polyP) as a donor to convert NDP to NTP. PolyP hydrolysis is slightly faster with UDP, but it can also use ADP, GDP and CDP. This Ruegeria pomeroyi (strain ATCC 700808 / DSM 15171 / DSS-3) (Silicibacter pomeroyi) protein is NDP-polyphosphate phosphotransferase 3.